A 483-amino-acid polypeptide reads, in one-letter code: Glutamate--tRNA ligase (483 aa).

The 'HIGH' region signature appears at 11-21 (PSPTGLLHIGN). The 'KMSKS' region signature appears at 255 to 259 (KLSKR). Residue Lys-258 coordinates ATP.

It belongs to the class-I aminoacyl-tRNA synthetase family. Glutamate--tRNA ligase type 1 subfamily. As to quaternary structure, monomer.

It localises to the cytoplasm. The enzyme catalyses tRNA(Glu) + L-glutamate + ATP = L-glutamyl-tRNA(Glu) + AMP + diphosphate. Its function is as follows. Catalyzes the attachment of glutamate to tRNA(Glu) in a two-step reaction: glutamate is first activated by ATP to form Glu-AMP and then transferred to the acceptor end of tRNA(Glu). In Lactococcus lactis subsp. lactis (strain IL1403) (Streptococcus lactis), this protein is Glutamate--tRNA ligase.